Reading from the N-terminus, the 351-residue chain is Alcohol dehydrogenase 2 (351 aa).

Residues Cys-47, His-70, Cys-101, Cys-104, Cys-107, Cys-115, and Cys-157 each coordinate Zn(2+). Residues 181-187 (GAGGGLG), Asp-205, Lys-209, 271-273 (VGL), and Arg-343 contribute to the NAD(+) site.

It belongs to the zinc-containing alcohol dehydrogenase family. Homotetramer. Zn(2+) is required as a cofactor.

The enzyme catalyses a primary alcohol + NAD(+) = an aldehyde + NADH + H(+). It carries out the reaction a secondary alcohol + NAD(+) = a ketone + NADH + H(+). The polypeptide is Alcohol dehydrogenase 2 (sodh-2) (Caenorhabditis elegans).